A 196-amino-acid polypeptide reads, in one-letter code: Superoxide dismutase [Fe] (196 aa).

4 residues coordinate Fe cation: His-20, His-68, Asp-157, and His-161.

This sequence belongs to the iron/manganese superoxide dismutase family. Homotetramer. Fe cation serves as cofactor.

It carries out the reaction 2 superoxide + 2 H(+) = H2O2 + O2. Destroys superoxide anion radicals which are normally produced within the cells and which are toxic to biological systems. The chain is Superoxide dismutase [Fe] from Tetrahymena pyriformis.